Consider the following 93-residue polypeptide: Pyrimidine/purine nucleoside phosphorylase (93 aa).

This sequence belongs to the nucleoside phosphorylase PpnP family.

It catalyses the reaction a purine D-ribonucleoside + phosphate = a purine nucleobase + alpha-D-ribose 1-phosphate. The catalysed reaction is adenosine + phosphate = alpha-D-ribose 1-phosphate + adenine. The enzyme catalyses cytidine + phosphate = cytosine + alpha-D-ribose 1-phosphate. It carries out the reaction guanosine + phosphate = alpha-D-ribose 1-phosphate + guanine. It catalyses the reaction inosine + phosphate = alpha-D-ribose 1-phosphate + hypoxanthine. The catalysed reaction is thymidine + phosphate = 2-deoxy-alpha-D-ribose 1-phosphate + thymine. The enzyme catalyses uridine + phosphate = alpha-D-ribose 1-phosphate + uracil. It carries out the reaction xanthosine + phosphate = alpha-D-ribose 1-phosphate + xanthine. Its function is as follows. Catalyzes the phosphorolysis of diverse nucleosides, yielding D-ribose 1-phosphate and the respective free bases. Can use uridine, adenosine, guanosine, cytidine, thymidine, inosine and xanthosine as substrates. Also catalyzes the reverse reactions. The protein is Pyrimidine/purine nucleoside phosphorylase of Tolumonas auensis (strain DSM 9187 / NBRC 110442 / TA 4).